The primary structure comprises 72 residues: Probable neurotoxin pcD-993 (72 aa).

A signal peptide spans 1–19 (MNYLVMISFALLLVIGVES). The 52-residue stretch at 21-72 (RDGYFVEPDNCVVHCMPSSEMCDRGCKHNGATSGSCKAFSKGGNACWCKGLR) folds into the LCN-type CS-alpha/beta domain. Cystine bridges form between Cys-35–Cys-56, Cys-42–Cys-66, and Cys-46–Cys-68. A propeptide (removed by a carboxypeptidase) is located at residue Arg-72.

This sequence belongs to the long (3 C-C) scorpion toxin superfamily. Expressed by the venom gland.

The protein localises to the secreted. This chain is Probable neurotoxin pcD-993, found in Androctonus australis (Sahara scorpion).